Consider the following 524-residue polypeptide: Butyrophilin subfamily 1 member A1 (524 aa).

An N-terminal signal peptide occupies residues 1–26; sequence MAVPTNSCLLVCLLTLTVLQLPTLDS. Residues 27–247 are Extracellular-facing; sequence AAPFDVTAPQ…APFVPRLTPW (221 aa). Ig-like V-type domains lie at 29-141 and 149-235; these read PFDV…VYLK and PQIS…VEIS. Cystine bridges form between cysteine 51/cysteine 125 and cysteine 165/cysteine 219. 2 N-linked (GlcNAc...) asparagine glycosylation sites follow: asparagine 56 and asparagine 216. Residues 248–268 traverse the membrane as a helical segment; sequence IVAVAIILLALGFLTIGSIFF. At 269–524 the chain is on the cytoplasmic side; it reads TWKLYKERSS…IPFSPSQAAP (256 aa). Positions 286–480 constitute a B30.2/SPRY domain; that stretch reads SKERLLEELR…LTICSTANGP (195 aa).

This sequence belongs to the immunoglobulin superfamily. BTN/MOG family. As to quaternary structure, seems to associate with xanthine dehydrogenase/oxidase. In terms of processing, N-glycosylated. Strongly expressed in lactating mammary tissue (at protein level). About 100-fold lower levels in virgin mammary tissue. Also detected in spleen and thymus at 10-20 times lower levels compared to those detected in virgin mammary gland. Very low levels in several other tissues, including brain, heart, kidney, lymph node, lung and small intestine. In the thymus, detected in the stroma, in epithelial cells (at protein level). Most prominent in medullary areas of the thymus and at the corticomedullary junction (at protein level).

The protein resides in the membrane. May function in the secretion of milk-fat droplets. May act as a specific membrane-associated receptor for the association of cytoplasmic droplets with the apical plasma membrane. Inhibits the proliferation of CD4 and CD8 T-cells activated by anti-CD3 antibodies, T-cell metabolism and IL2 and IFNG secretion. In Mus musculus (Mouse), this protein is Butyrophilin subfamily 1 member A1 (Btn1a1).